Reading from the N-terminus, the 267-residue chain is CD82 antigen (267 aa).

Residues 1–11 lie on the Cytoplasmic side of the membrane; the sequence is MGSACIKVTKY. Residue cysteine 5 is the site of S-palmitoyl cysteine attachment. A helical transmembrane segment spans residues 12–32; it reads FLFLFNLIFFILGAVILGFGV. The Extracellular portion of the chain corresponds to 33–53; the sequence is WILADKSSFISVLQTSSSSLR. Residues 54–72 form a helical membrane-spanning segment; sequence MGAYVFIGVGAVTMLMGFL. At 73-83 the chain is on the cytoplasmic side; it reads GCIGAVNEVRC. Cysteine 74 is lipidated: S-palmitoyl cysteine. A helical transmembrane segment spans residues 84–110; the sequence is LLGLYFAFLLLILIAQVTAGALFYFNM. Residues 111–228 lie on the Extracellular side of the membrane; the sequence is GKLKQEMGGI…KVQAWLQENL (118 aa). Residues asparagine 129, asparagine 157, and asparagine 198 are each glycosylated (N-linked (GlcNAc...) asparagine). The chain crosses the membrane as a helical span at residues 229 to 250; it reads GIILGVGVGVAIIELLGMVLSI. Residues 251–267 lie on the Cytoplasmic side of the membrane; sequence CLCRHVHSEDYSKVPKY.

The protein belongs to the tetraspanin (TM4SF) family. Forms homooligomers. Interacts directly with IGSF8. Interacts with EGFR. Interacts with VEGFA and PDGFB. Interacts with ITGA4. Interacts with ITGA6; this interaction reduces ITGA6 cell surface expression. Interacts with ITGB1. Interacts with TLR4; this interaction inhibits TLR4-mediated signaling pathway. Interacts with TLR9. Interacts with PLAUR. Post-translationally, palmitoylated. Palmitoylation contributes to oligomerization and surface expression. Lymphoid specific.

It localises to the cell membrane. The protein resides in the cytoplasmic vesicle. The protein localises to the phagosome. Structural component of specialized membrane microdomains known as tetraspanin-enriched microdomains (TERMs), which act as platforms for receptor clustering and signaling. Participates thereby in diverse biological functions such as cell signal transduction, adhesion, migration and protein trafficking. Acts as a attenuator of EGF signaling, facilitating ligand-induced endocytosis of the receptor and its subsequent desensitization. Mechanistically, modulates ligand-induced ubiquitination and trafficking of EGFR via E3 ligase CBL phosphorylation by PKC. Increases cell-matrix adhesion by regulating the membrane organization of integrin alpha4/ITA4. Modulates adhesion and suppresses cell migration through other integrins such as the alpha6/ITGA6 and beta1/ITGB1. Decreases cell-associated plasminogen activation by interfering with the interaction between urokinase-type plasminogen activator/PLAU and its receptor PLAUR. Associates with CD4 or CD8 and delivers costimulatory signals for the TCR/CD3 pathway. Plays a role in TLR9 trafficking to acidified CpG-containing compartments by controlling interaction between TLR9 and VAMP3 and subsequent myddosome assembly. Inhibits LPS-induced inflammatory response by preventing binding of LPS to TLR4 on the cell surface. Plays a role in the activation of macrophages into anti-inflammatory phenotypes. Independently of Toll-like receptor (TLR) signaling, is recruited to pathogen-containing phagosomes prior to fusion with lysosomes and thereby participates in antigen presentation. Also acts to control angiogenesis and switch angiogenic milieu to quiescent state by binding and sequestering VEGFA and PDGFB to inhibit the signaling they trigger via their respective cell surface receptor. The protein is CD82 antigen (CD82) of Homo sapiens (Human).